The chain runs to 276 residues: Light-independent protochlorophyllide reductase iron-sulfur ATP-binding protein (276 aa).

ATP contacts are provided by residues 12–17 and lysine 41; that span reads GIGKST. Serine 16 lines the Mg(2+) pocket. Cysteine 97 and cysteine 131 together coordinate [4Fe-4S] cluster. Residue 182–183 participates in ATP binding; the sequence is NR.

Belongs to the NifH/BchL/ChlL family. Homodimer. Protochlorophyllide reductase is composed of three subunits; BchL, BchN and BchB. It depends on [4Fe-4S] cluster as a cofactor.

The enzyme catalyses chlorophyllide a + oxidized 2[4Fe-4S]-[ferredoxin] + 2 ADP + 2 phosphate = protochlorophyllide a + reduced 2[4Fe-4S]-[ferredoxin] + 2 ATP + 2 H2O. It functions in the pathway porphyrin-containing compound metabolism; bacteriochlorophyll biosynthesis (light-independent). Functionally, component of the dark-operative protochlorophyllide reductase (DPOR) that uses Mg-ATP and reduced ferredoxin to reduce ring D of protochlorophyllide (Pchlide) to form chlorophyllide a (Chlide). This reaction is light-independent. The L component serves as a unique electron donor to the NB-component of the complex, and binds Mg-ATP. The polypeptide is Light-independent protochlorophyllide reductase iron-sulfur ATP-binding protein (Chlorobium luteolum (strain DSM 273 / BCRC 81028 / 2530) (Pelodictyon luteolum)).